The primary structure comprises 193 residues: Ras-like protein 2 (193 aa).

Residue 12–19 (GGGGVGKS) participates in GTP binding. Residues 34–42 (YDPTIEDSY) carry the Effector region motif. GTP contacts are provided by residues 59–63 (DTAGQ) and 118–121 (NKCD). Cys-190 carries the post-translational modification Cysteine methyl ester. The S-geranylgeranyl cysteine moiety is linked to residue Cys-190. The propeptide at 191 to 193 (KLL) is removed in mature form.

Belongs to the small GTPase superfamily. Ras family.

The protein localises to the cell membrane. It carries out the reaction GTP + H2O = GDP + phosphate + H(+). In terms of biological role, ras proteins bind GDP/GTP and possess intrinsic GTPase activity. This chain is Ras-like protein 2 (RAS-2), found in Physarum polycephalum (Slime mold).